The chain runs to 1829 residues: Afadin (1829 aa).

The region spanning 39–133 (FHGVMRFYFQ…GRFVLKNEND (95 aa)) is the Ras-associating 1 domain. The disordered stretch occupies residues 129–196 (KNENDAIPAK…PSQGDDSENS (68 aa)). Residues 146–186 (EKQEKEGVIQNFKRTLSKKEKKEKKKREKEALRQASDKEER) adopt a coiled-coil conformation. Basic residues predominate over residues 160 to 172 (TLSKKEKKEKKKR). The segment covering 173–189 (EKEALRQASDKEERPSQ) has biased composition (basic and acidic residues). A phosphoserine mark is found at Ser216, Ser246, and Ser256. One can recognise a Ras-associating 2 domain in the interval 246–348 (SGGTLRIYAD…LVFQLKRRPP (103 aa)). The span at 356-371 (KKHVEGKPLKGKDRAD) shows a compositional bias: basic and acidic residues. The interval 356–377 (KKHVEGKPLKGKDRADGSGYGS) is disordered. Phosphoserine occurs at positions 391 and 424. The region spanning 441–507 (FGPGIQPHHC…KFVDPIQDHV (67 aa)) is the FHA domain. Phosphoserine occurs at positions 512, 557, 562, 589, and 655. Positions 539–595 (DIHSGTALPASRSTTRLDSDRVSSASSTAERGMVKPMIRLDQEQDYRRRESRTQDAA) are disordered. A compositionally biased stretch (basic and acidic residues) spans 576-591 (IRLDQEQDYRRRESRT). The Dilute domain occupies 668-915 (NKMVSMMEGV…IENVVAVAEN (248 aa)). The PDZ domain occupies 1014-1100 (VITVTLKKQN…VVTLEVAKQG (87 aa)). 9 positions are modified to phosphoserine: Ser1090, Ser1114, Ser1133, Ser1147, Ser1150, Ser1179, Ser1180, Ser1189, and Ser1206. Residues 1114–1230 (SPMMQRISDR…PRPEAYPIPT (117 aa)) form a disordered region. Basic and acidic residues predominate over residues 1120-1135 (ISDRRGSGKPRPKSEG). The span at 1139–1150 (YNNSAQNGSPES) shows a compositional bias: polar residues. Residues 1159–1179 (SEPKKLPGDDRLMKNRADHRS) are compositionally biased toward basic and acidic residues. A compositionally biased stretch (polar residues) spans 1195–1217 (PYTSGTAAKITSVSTGNLCTEEQ). 2 positions are modified to phosphothreonine: Thr1218 and Thr1239. A phosphoserine mark is found at Ser1245 and Ser1282. Over residues 1300–1309 (ESGMDRKCDS) the composition is skewed to basic and acidic residues. Disordered stretches follow at residues 1300-1533 (ESGM…EKQQ) and 1574-1724 (RLQE…KTQV). Over residues 1316-1325 (SSSVESSTSS) the composition is skewed to low complexity. Residues 1332-1344 (SSKSVTPASTLTK) are compositionally biased toward polar residues. Residue Ser1335 is modified to Phosphoserine. Phosphothreonine is present on Thr1337. Residues 1371–1380 (LPPPPPPPPA) are compositionally biased toward pro residues. A compositionally biased stretch (low complexity) spans 1401-1412 (NQAAPQSAQVAA). Over residues 1413–1447 (AERKKREEHQRWYEKEKARLEEERERKRREQERKL) the composition is skewed to basic and acidic residues. The stretch at 1417 to 1454 (KREEHQRWYEKEKARLEEERERKRREQERKLGQMRTQS) forms a coiled coil. The span at 1450–1464 (MRTQSLNPASFSPLA) shows a compositional bias: polar residues. Basic and acidic residues predominate over residues 1494-1510 (TIERRDLQYITISKEEL). Phosphoserine occurs at positions 1506 and 1517. Positions 1520–1533 (PWKRDAREKLEKQQ) are enriched in basic and acidic residues. A coiled-coil region spans residues 1530–1564 (EKQQQMHIVDMLSKEIHELQNKGDRTAEESDRLRK). The span at 1583 to 1594 (EDDDEEEDDDVD) shows a compositional bias: acidic residues. Residues 1600–1672 (QRLEAERRAR…SRLEAERRRQ (73 aa)) are a coiled coil. Basic and acidic residues predominate over residues 1602–1682 (LEAERRARLQ…HEEAARRLLE (81 aa)). Ser1701 is modified (phosphoserine). Polar residues predominate over residues 1715–1724 (RNASYLKTQV). Residue Ser1726 is modified to Phosphoserine. The segment at 1742-1829 (DEEENYVPAG…TELENELNTK (88 aa)) is disordered. Positions 1753-1764 (NSYSGSAGTTAG) are enriched in polar residues. Residues 1768–1781 (APRDTREKLSRSQD) are compositionally biased toward basic and acidic residues. Phosphoserine occurs at positions 1779 and 1804. Residues 1809–1829 (VSDKVKASRKLTELENELNTK) show a composition bias toward basic and acidic residues. Lys1812 is modified (N6-acetyllysine).

In terms of assembly, homodimer. Interacts with F-actin, nectin and NECTIN3. Essential for the association of nectin and E-cadherin. Isoform 2/s-afadin does not interact with F-actin. Interacts with ZO-1 and occludin, but probably in an indirect manner. Interacts with RIT1, RIT2, NRXN1 and BCR. Interacts with ADAM10; the interaction locks ADAM10 at adherens junctions following ADAM10 recruitment to adherens junctions by TSPAN33. As to expression, isoform 1 is widely expressed, including in heart, brain, spleen, lung, liver, skeletal muscle, kidney and testis. Isoform 2 is mainly expressed in the brain.

It is found in the cell junction. The protein localises to the adherens junction. In terms of biological role, belongs to an adhesion system, probably together with the E-cadherin-catenin system, which plays a role in the organization of homotypic, interneuronal and heterotypic cell-cell adherens junctions (AJs). Nectin- and actin-filament-binding protein that connects nectin to the actin cytoskeleton. May play a key role in the organization of epithelial structures of the embryonic ectoderm. Essential for the organization of adherens junctions. The protein is Afadin of Rattus norvegicus (Rat).